A 297-amino-acid chain; its full sequence is MAKRIFLFILTNLLVITTIGIVLTIITSVTGVGSYIQNGRIDLMALLVFSLVVGFVGSFISLGMSRWMAKTMMGVRVLNPKKQSLSYEEQQLVDRVHRLSRAAGMTKMPEVGIYHSPEVNAFATGPSKRRSLVAVSSGLLQQMDDAAVEGVLAHEVAHITNGDMVTMTLLQGIVNTFVVFLSRIAAWVASRFVKEDLAPVVHFIAMIVFQIIFSILGSLVVFAYSRHREFHADRGGADLAGKDKMIHALRTLKSYTGHVNEEDQTAVQTLKINGKKHSSLFSTHPDLDERIRRLEAK.

2 helical membrane passes run 5 to 25 (IFLF…VLTI) and 43 to 63 (LMAL…ISLG). Histidine 154 lines the Zn(2+) pocket. Glutamate 155 is an active-site residue. Histidine 158 provides a ligand contact to Zn(2+). 2 consecutive transmembrane segments (helical) span residues 169–189 (LLQG…AWVA) and 203–223 (FIAM…VVFA). Glutamate 229 is a Zn(2+) binding site.

Belongs to the peptidase M48B family. Requires Zn(2+) as cofactor.

It is found in the cell membrane. This Bacillus velezensis (strain DSM 23117 / BGSC 10A6 / LMG 26770 / FZB42) (Bacillus amyloliquefaciens subsp. plantarum) protein is Protease HtpX homolog.